The primary structure comprises 196 residues: Holliday junction branch migration complex subunit RuvA (196 aa).

A domain I region spans residues 1–63; that stretch reads MYDYIKGKLS…DDAHLLFGFH (63 aa). The domain II stretch occupies residues 64 to 142; sequence TENEKEIFLN…EASGESATSR (79 aa). The interval 143–148 is flexible linker; sequence KVSSEQ. The domain III stretch occupies residues 148–196; that stretch reads QNSNLEEAMEALLALGYKATELKKVKAFFEGTNETVEQYIKSSLKMLMK.

Belongs to the RuvA family. In terms of assembly, homotetramer. Forms an RuvA(8)-RuvB(12)-Holliday junction (HJ) complex. HJ DNA is sandwiched between 2 RuvA tetramers; dsDNA enters through RuvA and exits via RuvB. An RuvB hexamer assembles on each DNA strand where it exits the tetramer. Each RuvB hexamer is contacted by two RuvA subunits (via domain III) on 2 adjacent RuvB subunits; this complex drives branch migration. In the full resolvosome a probable DNA-RuvA(4)-RuvB(12)-RuvC(2) complex forms which resolves the HJ.

It is found in the cytoplasm. Its function is as follows. The RuvA-RuvB-RuvC complex processes Holliday junction (HJ) DNA during genetic recombination and DNA repair, while the RuvA-RuvB complex plays an important role in the rescue of blocked DNA replication forks via replication fork reversal (RFR). RuvA specifically binds to HJ cruciform DNA, conferring on it an open structure. The RuvB hexamer acts as an ATP-dependent pump, pulling dsDNA into and through the RuvAB complex. HJ branch migration allows RuvC to scan DNA until it finds its consensus sequence, where it cleaves and resolves the cruciform DNA. The protein is Holliday junction branch migration complex subunit RuvA of Streptococcus agalactiae serotype III (strain NEM316).